Reading from the N-terminus, the 67-residue chain is DNA-directed RNA polymerase subunit omega (67 aa).

It belongs to the RNA polymerase subunit omega family. As to quaternary structure, the RNAP catalytic core consists of 2 alpha, 1 beta, 1 beta' and 1 omega subunit. When a sigma factor is associated with the core the holoenzyme is formed, which can initiate transcription.

It carries out the reaction RNA(n) + a ribonucleoside 5'-triphosphate = RNA(n+1) + diphosphate. Promotes RNA polymerase assembly. Latches the N- and C-terminal regions of the beta' subunit thereby facilitating its interaction with the beta and alpha subunits. The sequence is that of DNA-directed RNA polymerase subunit omega from Polaromonas sp. (strain JS666 / ATCC BAA-500).